Reading from the N-terminus, the 266-residue chain is Apolipoprotein A-I (266 aa).

The signal sequence occupies residues 1 to 18 (MKAALLTLAVLFLTGSQA). 2 repeat units span residues 67 to 88 (LKLLDNWDSLSSTVTKLREQIG) and 89 to 110 (PVTQEFWDNLEKETEVLRQEMS). The tract at residues 67-266 (LKLLDNWDSL…DEATKKLNAQ (200 aa)) is 10 X approximate tandem repeats. A Methionine sulfoxide modification is found at methionine 109. The stretch at 111–121 (KDLEEVKQKVQ) is one 3; half-length repeat. A run of 5 repeats spans residues 122-143 (PYLDDFQKKWQEEVELYRQKVA), 144-165 (PLGSELREGARQKLQELQEKLS), 166-187 (PLAEELRDRARTHVDALRAQLA), 188-209 (PYSDDLRERLAARLEALKEGGG), and 210-231 (ASLAEYHARASEQLSALGEKAR). The stretch at 232–242 (PALEDLRQGLL) is one 9; half-length repeat. Residues 243 to 266 (PVLESFKVSLLAAIDEATKKLNAQ) form repeat 10.

Belongs to the apolipoprotein A1/A4/E family. As to quaternary structure, homodimer. Interacts with APOA1BP and CLU. Component of a sperm activating protein complex (SPAP), consisting of APOA1, an immunoglobulin heavy chain, an immunoglobulin light chain and albumin. Interacts with NDRG1. Interacts with SCGB3A2. Interacts with NAXE and YJEFN3. Post-translationally, palmitoylated. In terms of processing, glycosylated. Phosphorylation sites are present in the extracellular medium. In terms of tissue distribution, major protein of plasma HDL, also found in chylomicrons. Synthesized in the liver and small intestine.

The protein localises to the secreted. Its function is as follows. Participates in the reverse transport of cholesterol from tissues to the liver for excretion by promoting cholesterol efflux from tissues and by acting as a cofactor for the lecithin cholesterol acyltransferase (LCAT). As part of the SPAP complex, activates spermatozoa motility. This chain is Apolipoprotein A-I (APOA1), found in Canis lupus familiaris (Dog).